Reading from the N-terminus, the 182-residue chain is Ribosome maturation factor RimM (182 aa).

In terms of domain architecture, PRC barrel spans 102 to 182 (EEDDYYWKDL…RVEVDWDPGF (81 aa)).

It belongs to the RimM family. Binds ribosomal protein uS19.

Its subcellular location is the cytoplasm. Functionally, an accessory protein needed during the final step in the assembly of 30S ribosomal subunit, possibly for assembly of the head region. Essential for efficient processing of 16S rRNA. May be needed both before and after RbfA during the maturation of 16S rRNA. It has affinity for free ribosomal 30S subunits but not for 70S ribosomes. The protein is Ribosome maturation factor RimM of Yersinia pseudotuberculosis serotype IB (strain PB1/+).